We begin with the raw amino-acid sequence, 216 residues long: Probable nicotinate-nucleotide adenylyltransferase (216 aa).

The protein belongs to the NadD family.

It carries out the reaction nicotinate beta-D-ribonucleotide + ATP + H(+) = deamido-NAD(+) + diphosphate. It functions in the pathway cofactor biosynthesis; NAD(+) biosynthesis; deamido-NAD(+) from nicotinate D-ribonucleotide: step 1/1. Its function is as follows. Catalyzes the reversible adenylation of nicotinate mononucleotide (NaMN) to nicotinic acid adenine dinucleotide (NaAD). The chain is Probable nicotinate-nucleotide adenylyltransferase from Geobacillus kaustophilus (strain HTA426).